The sequence spans 159 residues: Transcriptional repressor NrdR (159 aa).

The interval 1–22 (MRCPFCGSEDTQVKDSRPAEDN) is disordered. The segment at 3–34 (CPFCGSEDTQVKDSRPAEDNTSIRRRRICPDC) is a zinc-finger region. Positions 11 to 22 (TQVKDSRPAEDN) are enriched in basic and acidic residues. An ATP-cone domain is found at 49-139 (LMVIKKSGRK…VYRDFSHAED (91 aa)).

This sequence belongs to the NrdR family. Requires Zn(2+) as cofactor.

In terms of biological role, negatively regulates transcription of bacterial ribonucleotide reductase nrd genes and operons by binding to NrdR-boxes. The polypeptide is Transcriptional repressor NrdR (Agrobacterium fabrum (strain C58 / ATCC 33970) (Agrobacterium tumefaciens (strain C58))).